The chain runs to 255 residues: Acetylglutamate kinase (255 aa).

Residues 40-41, R62, and N153 contribute to the substrate site; that span reads GG.

Belongs to the acetylglutamate kinase family. ArgB subfamily.

It is found in the cytoplasm. It carries out the reaction N-acetyl-L-glutamate + ATP = N-acetyl-L-glutamyl 5-phosphate + ADP. The protein operates within amino-acid biosynthesis; L-arginine biosynthesis; N(2)-acetyl-L-ornithine from L-glutamate: step 2/4. Its function is as follows. Catalyzes the ATP-dependent phosphorylation of N-acetyl-L-glutamate. The chain is Acetylglutamate kinase from Bacillus thuringiensis subsp. konkukian (strain 97-27).